The sequence spans 419 residues: Glucose-1-phosphate adenylyltransferase (419 aa).

Alpha-D-glucose 1-phosphate-binding positions include Tyr106, Gly171, 186-187, and Ser204; that span reads EK.

Belongs to the bacterial/plant glucose-1-phosphate adenylyltransferase family. In terms of assembly, homotetramer.

The enzyme catalyses alpha-D-glucose 1-phosphate + ATP + H(+) = ADP-alpha-D-glucose + diphosphate. It participates in glycan biosynthesis; glycogen biosynthesis. Involved in the biosynthesis of ADP-glucose, a building block required for the elongation reactions to produce glycogen. Catalyzes the reaction between ATP and alpha-D-glucose 1-phosphate (G1P) to produce pyrophosphate and ADP-Glc. The sequence is that of Glucose-1-phosphate adenylyltransferase from Roseobacter denitrificans (strain ATCC 33942 / OCh 114) (Erythrobacter sp. (strain OCh 114)).